We begin with the raw amino-acid sequence, 354 residues long: Putative [LysW]-L-2-aminoadipate/[LysW]-L-glutamate phosphate reductase (354 aa).

Residues 10–13 and 34–36 contribute to the NADP(+) site; these read SGVI and SRR. The active site involves Cys153. Position 321 (Asn321) interacts with NADP(+).

Belongs to the NAGSA dehydrogenase family. Type 1 subfamily. LysY sub-subfamily.

Its subcellular location is the cytoplasm. The catalysed reaction is [amino-group carrier protein]-C-terminal-N-(1-carboxy-5-oxopentan-1-yl)-L-glutamine + phosphate + NADP(+) = [amino-group carrier protein]-C-terminal-N-(1-carboxy-5-phosphooxy-5-oxopentan-1-yl)-L-glutamine + NADPH + H(+). The enzyme catalyses [amino-group carrier protein]-C-terminal-gamma-(L-glutamyl-5-semialdehyde)-L-glutamate + phosphate + NADP(+) = [amino-group carrier protein]-C-terminal-gamma-(5-phospho-L-glutamyl)-L-glutamate + NADPH + H(+). It functions in the pathway amino-acid biosynthesis; L-lysine biosynthesis via AAA pathway; L-lysine from L-alpha-aminoadipate (Thermus route): step 3/5. It participates in amino-acid biosynthesis; L-arginine biosynthesis. Functionally, involved in both the arginine and lysine biosynthetic pathways. This is Putative [LysW]-L-2-aminoadipate/[LysW]-L-glutamate phosphate reductase from Caldivirga maquilingensis (strain ATCC 700844 / DSM 13496 / JCM 10307 / IC-167).